A 617-amino-acid polypeptide reads, in one-letter code: Dihydroxy-acid dehydratase (617 aa).

A Mg(2+)-binding site is contributed by aspartate 81. Cysteine 122 provides a ligand contact to [2Fe-2S] cluster. Positions 123 and 124 each coordinate Mg(2+). Lysine 124 bears the N6-carboxylysine mark. Residue cysteine 195 participates in [2Fe-2S] cluster binding. Mg(2+) is bound at residue glutamate 492. Serine 518 (proton acceptor) is an active-site residue.

The protein belongs to the IlvD/Edd family. In terms of assembly, homodimer. It depends on [2Fe-2S] cluster as a cofactor. Mg(2+) is required as a cofactor.

It carries out the reaction (2R)-2,3-dihydroxy-3-methylbutanoate = 3-methyl-2-oxobutanoate + H2O. The catalysed reaction is (2R,3R)-2,3-dihydroxy-3-methylpentanoate = (S)-3-methyl-2-oxopentanoate + H2O. The protein operates within amino-acid biosynthesis; L-isoleucine biosynthesis; L-isoleucine from 2-oxobutanoate: step 3/4. Its pathway is amino-acid biosynthesis; L-valine biosynthesis; L-valine from pyruvate: step 3/4. Its function is as follows. Functions in the biosynthesis of branched-chain amino acids. Catalyzes the dehydration of (2R,3R)-2,3-dihydroxy-3-methylpentanoate (2,3-dihydroxy-3-methylvalerate) into 2-oxo-3-methylpentanoate (2-oxo-3-methylvalerate) and of (2R)-2,3-dihydroxy-3-methylbutanoate (2,3-dihydroxyisovalerate) into 2-oxo-3-methylbutanoate (2-oxoisovalerate), the penultimate precursor to L-isoleucine and L-valine, respectively. This Buchnera aphidicola subsp. Cinara cedri (strain Cc) protein is Dihydroxy-acid dehydratase.